Reading from the N-terminus, the 420-residue chain is Glutamate-1-semialdehyde 2,1-aminomutase (420 aa).

Residue K259 is modified to N6-(pyridoxal phosphate)lysine.

The protein belongs to the class-III pyridoxal-phosphate-dependent aminotransferase family. HemL subfamily. The cofactor is pyridoxal 5'-phosphate.

The protein localises to the cytoplasm. It carries out the reaction (S)-4-amino-5-oxopentanoate = 5-aminolevulinate. Its pathway is porphyrin-containing compound metabolism; protoporphyrin-IX biosynthesis; 5-aminolevulinate from L-glutamyl-tRNA(Glu): step 2/2. This is Glutamate-1-semialdehyde 2,1-aminomutase from Sulfolobus acidocaldarius (strain ATCC 33909 / DSM 639 / JCM 8929 / NBRC 15157 / NCIMB 11770).